The following is a 130-amino-acid chain: Small ribosomal subunit protein uS9 (130 aa).

The protein belongs to the universal ribosomal protein uS9 family.

This Agathobacter rectalis (strain ATCC 33656 / DSM 3377 / JCM 17463 / KCTC 5835 / VPI 0990) (Eubacterium rectale) protein is Small ribosomal subunit protein uS9.